The chain runs to 90 residues: UPF0335 protein RPB_1426 (90 aa).

Belongs to the UPF0335 family.

The protein is UPF0335 protein RPB_1426 of Rhodopseudomonas palustris (strain HaA2).